The following is a 120-amino-acid chain: Glycine cleavage system H protein (120 aa).

The region spanning Val-17–Lys-99 is the Lipoyl-binding domain. Residue Lys-58 is modified to N6-lipoyllysine.

The protein belongs to the GcvH family. As to quaternary structure, the glycine cleavage system is composed of four proteins: P, T, L and H. The cofactor is (R)-lipoate.

Functionally, the glycine cleavage system catalyzes the degradation of glycine. The H protein shuttles the methylamine group of glycine from the P protein to the T protein. The sequence is that of Glycine cleavage system H protein from Sinorhizobium fredii (strain NBRC 101917 / NGR234).